A 152-amino-acid chain; its full sequence is Small ribosomal subunit protein uS19 (152 aa).

Belongs to the universal ribosomal protein uS19 family.

Protein S19 forms a complex with S13 that binds strongly to the 16S ribosomal RNA. The chain is Small ribosomal subunit protein uS19 (rps19) from Methanocaldococcus jannaschii (strain ATCC 43067 / DSM 2661 / JAL-1 / JCM 10045 / NBRC 100440) (Methanococcus jannaschii).